We begin with the raw amino-acid sequence, 437 residues long: Ribosomal protein uS12 methylthiotransferase RimO (437 aa).

Positions 9 to 124 (TKVNIVTLGC…LPAILKKFRA (116 aa)) constitute an MTTase N-terminal domain. Residues cysteine 18, cysteine 56, cysteine 90, cysteine 151, cysteine 155, and cysteine 158 each contribute to the [4Fe-4S] cluster site. Positions 137–367 (TTPSHYAYVK…MSIQEGISAE (231 aa)) constitute a Radical SAM core domain. Residues 370 to 437 (EKKIGNTYKV…EFDLFGEIVK (68 aa)) enclose the TRAM domain.

It belongs to the methylthiotransferase family. RimO subfamily. The cofactor is [4Fe-4S] cluster.

It localises to the cytoplasm. The enzyme catalyses L-aspartate(89)-[ribosomal protein uS12]-hydrogen + (sulfur carrier)-SH + AH2 + 2 S-adenosyl-L-methionine = 3-methylsulfanyl-L-aspartate(89)-[ribosomal protein uS12]-hydrogen + (sulfur carrier)-H + 5'-deoxyadenosine + L-methionine + A + S-adenosyl-L-homocysteine + 2 H(+). Catalyzes the methylthiolation of an aspartic acid residue of ribosomal protein uS12. The sequence is that of Ribosomal protein uS12 methylthiotransferase RimO from Cytophaga hutchinsonii (strain ATCC 33406 / DSM 1761 / CIP 103989 / NBRC 15051 / NCIMB 9469 / D465).